The primary structure comprises 165 residues: E3 ubiquitin ligase complex SCF subunit sconC (165 aa).

Positions 106–165 (ILAANYLDIKALLDVGCKTVANMIKGKSPEEIRKTFNIQNDFTPEEEDQIRRENEWAEDR) are interaction with the F-box domain of F-box proteins.

The protein belongs to the SKP1 family. Component of the SCF (SKP1-CUL1-F-box protein) E3 ubiquitin ligase complexes.

It functions in the pathway protein modification; protein ubiquitination. Its function is as follows. Essential component of the SCF (SKP1-CUL1-F-box protein) E3 ubiquitin ligase complexes, which mediate the ubiquitination and subsequent proteasomal degradation of target proteins. Controls sulfur metabolite repression, probably by mediating the inactivation or degradation of the metR transcription factor. The protein is E3 ubiquitin ligase complex SCF subunit sconC (sconC) of Arthroderma otae (Microsporum canis).